The following is a 363-amino-acid chain: Disease resistance protein RBA1 (363 aa).

The TIR domain maps to 12–175; that stretch reads PVPKVFLSFR…EIVKEVERVL (164 aa). Residues 21 to 26 and G53 each bind NAD(+); that span reads RGEEIR. Residue E86 is part of the active site.

As to quaternary structure, homooligomer; homooligomerization is required for activity.

It localises to the cytoplasm. It is found in the nucleus. The protein resides in the nucleoplasm. The catalysed reaction is NAD(+) + H2O = ADP-D-ribose + nicotinamide + H(+). It catalyses the reaction NADP(+) + H2O = ADP-D-ribose 2'-phosphate + nicotinamide + H(+). In terms of biological role, disease resistance (R) protein that specifically recognizes the HopBA1 type III effector protein from P.syringae, and triggers cell death. Acts as a NAD(+) hydrolase (NADase): in response to pathogen-recognition, catalyzes cleavage of NAD(+) into ADP-D-ribose (ADPR) and nicotinamide; NAD(+) cleavage triggering a defense system that promotes cell death. In addition to ADPR, also generates a cyclization variant of cyclic ADPR (cADPR), termed v-cADPR, for which the cyclizing bond is unknown. Also able to hydrolyze NADP(+), but not other NAD(+)-related molecules. The protein is Disease resistance protein RBA1 of Arabidopsis thaliana (Mouse-ear cress).